Reading from the N-terminus, the 160-residue chain is SsrA-binding protein (160 aa).

Residues 131–160 (KKEFDKRHTEKERDSDREIQRAMRTKGKDD) are disordered.

It belongs to the SmpB family.

It localises to the cytoplasm. Its function is as follows. Required for rescue of stalled ribosomes mediated by trans-translation. Binds to transfer-messenger RNA (tmRNA), required for stable association of tmRNA with ribosomes. tmRNA and SmpB together mimic tRNA shape, replacing the anticodon stem-loop with SmpB. tmRNA is encoded by the ssrA gene; the 2 termini fold to resemble tRNA(Ala) and it encodes a 'tag peptide', a short internal open reading frame. During trans-translation Ala-aminoacylated tmRNA acts like a tRNA, entering the A-site of stalled ribosomes, displacing the stalled mRNA. The ribosome then switches to translate the ORF on the tmRNA; the nascent peptide is terminated with the 'tag peptide' encoded by the tmRNA and targeted for degradation. The ribosome is freed to recommence translation, which seems to be the essential function of trans-translation. In Stutzerimonas stutzeri (strain A1501) (Pseudomonas stutzeri), this protein is SsrA-binding protein.